Here is a 250-residue protein sequence, read N- to C-terminus: MGKKITKQDRESQISNICNDKNLSFVGWIGEYTNIKSTLTLKCNKCYYTWSPRLDNFLRITAQKCPACAGKARWTKEEREEQIKSKCAEKGYNFLSWSSTYINKDSKIILKCLKDGCIWDVSIHHFINHDTGCPDCASGGFNPNIPATFYIQKLTYQGTHFLKFGITGKDVLERMRQQSNKSLCEHSVIFSHTFSYGSMARGLEKVVKDSVNTGVLDKRILPDGYTETCHYSELETILSLTNSFIQENIR.

Its function is as follows. Putative endonuclease. This chain is Putative endonuclease, found in Escherichia coli (Enterobacteria phage T5).